The chain runs to 732 residues: Polyribonucleotide nucleotidyltransferase (732 aa).

Residues D483 and D489 each coordinate Mg(2+). The KH domain occupies 550–609 (PRIVTVQIPVDKIGELIGPKGKNIRGIQDETGAELSVEDDGTVTIAAVGGDSMERAKQMV). In terms of domain architecture, S1 motif spans 619–687 (GETYEGTVKT…ERGRLRLSMK (69 aa)). The disordered stretch occupies residues 684–732 (LSMKALLPKPEGMPDEPPQSERPRRDDGERSGGDRGGRGGRNGGGRDRR). Basic and acidic residues predominate over residues 702-720 (QSERPRRDDGERSGGDRGG).

The protein belongs to the polyribonucleotide nucleotidyltransferase family. It depends on Mg(2+) as a cofactor.

The protein resides in the cytoplasm. It catalyses the reaction RNA(n+1) + phosphate = RNA(n) + a ribonucleoside 5'-diphosphate. Its function is as follows. Involved in mRNA degradation. Catalyzes the phosphorolysis of single-stranded polyribonucleotides processively in the 3'- to 5'-direction. In Gemmatimonas aurantiaca (strain DSM 14586 / JCM 11422 / NBRC 100505 / T-27), this protein is Polyribonucleotide nucleotidyltransferase.